Consider the following 376-residue polypeptide: Succinate--CoA ligase [ADP-forming] subunit beta (376 aa).

Residues 9–237 (KEIFSKYGIP…PTEEEKVEAD (229 aa)) form the ATP-grasp domain. ATP contacts are provided by residues Lys46, 53–55 (GRG), Val95, and Glu100. Mg(2+) contacts are provided by Asn192 and Asp206. Substrate-binding positions include Asn257 and 314-316 (GIT).

Belongs to the succinate/malate CoA ligase beta subunit family. As to quaternary structure, heterotetramer of two alpha and two beta subunits. Requires Mg(2+) as cofactor.

It catalyses the reaction succinate + ATP + CoA = succinyl-CoA + ADP + phosphate. The enzyme catalyses GTP + succinate + CoA = succinyl-CoA + GDP + phosphate. Its pathway is carbohydrate metabolism; tricarboxylic acid cycle; succinate from succinyl-CoA (ligase route): step 1/1. Its function is as follows. Succinyl-CoA synthetase functions in the citric acid cycle (TCA), coupling the hydrolysis of succinyl-CoA to the synthesis of either ATP or GTP and thus represents the only step of substrate-level phosphorylation in the TCA. The beta subunit provides nucleotide specificity of the enzyme and binds the substrate succinate, while the binding sites for coenzyme A and phosphate are found in the alpha subunit. The polypeptide is Succinate--CoA ligase [ADP-forming] subunit beta (Bacteroides thetaiotaomicron (strain ATCC 29148 / DSM 2079 / JCM 5827 / CCUG 10774 / NCTC 10582 / VPI-5482 / E50)).